Reading from the N-terminus, the 75-residue chain is UPF0352 protein VIBHAR_03027 (75 aa).

Belongs to the UPF0352 family.

This chain is UPF0352 protein VIBHAR_03027, found in Vibrio campbellii (strain ATCC BAA-1116).